Reading from the N-terminus, the 145-residue chain is Protein FAM216B (145 aa).

The disordered stretch occupies residues 92-121 (TKRASAKAGPHRTVPQRAAGRTRTQPSARP).

Belongs to the FAM216 family.

This is Protein FAM216B (FAM216B) from Bos taurus (Bovine).